The following is a 167-amino-acid chain: Ammonium/H(+) antiporter subunit AmhM (167 aa).

Positions 79–163 (IDRIKLIRKQ…IQKFEELCAC (85 aa)) constitute an RCK C-terminal domain.

Interacts with AmhT.

The protein localises to the cell membrane. Modulates the activity of the ammonium/proton antiporter AmhT. The polypeptide is Ammonium/H(+) antiporter subunit AmhM (amhM) (Alkalihalophilus pseudofirmus (strain ATCC BAA-2126 / JCM 17055 / OF4) (Bacillus pseudofirmus)).